The sequence spans 388 residues: Aldolase vrtJ (388 aa).

Lys-241 is subject to N6-(pyridoxal phosphate)lysine.

It belongs to the threonine aldolase family. It depends on pyridoxal 5'-phosphate as a cofactor.

It functions in the pathway secondary metabolite biosynthesis; terpenoid biosynthesis. Its function is as follows. Aldolase; part of the gene cluster that mediates the biosynthesis of viridicatumtoxin, a tetracycline-like fungal meroterpenoid with a unique, fused spirobicyclic ring system. The first step of the pathway is the production of the malonamoyl-CoA starter unit for the polyketide synthase vrtA. The aldolase vrtJ may be involved in the synthesis of the malonamate substrate for malonamoyl-CoA synthetase vrtB. The polyketide synthase vrtA then may utilize the malonamoyl-CoA starter unit, followed by sequential condensation of eight malonyl-CoA units to form the polyketide backbone. The cyclization of the last ring could be mediated by the lactamase-like protein vrtG. The proposed post-PKS tailoring steps are a hydroxylation at C5 catalyzed the cytochrome P450 monooxygenase vrtE, a hydroxylation at C12a catalyzed by VrtH and/or VrtI, and an O-methylation by the O-methyltransferase vrtF. VrtC is then proposed to catalyze the transfer of a geranyl group synthesized by vrtD to the aromatic C ring of the tetracyclic polyketide intermediate of viridicatumtoxin to yield previridicatumtoxin. Finally, the cytochrome P450 monooxygenase vrtK catalyzes the spirocyclization of the geranyl moiety of previridicatumtoxin to afford viridicatumtoxin. This chain is Aldolase vrtJ, found in Penicillium aethiopicum.